Reading from the N-terminus, the 227-residue chain is uncharacterized protein (227 aa).

Positions 1–25 (MLIMKKLLLIAATSATMLSSSVSFA) are cleaved as a signal peptide.

This sequence to R.conorii RC1281.

This is an uncharacterized protein from Rickettsia conorii (strain ATCC VR-613 / Malish 7).